The primary structure comprises 562 residues: Putative transport protein NT01EI_2530 (562 aa).

6 helical membrane-spanning segments follow: residues 8–28 (LLTG…LCLG), 32–52 (LGSI…LLGQ), 66–86 (FMLF…SIFF), 94–114 (MLAL…GKLF), 118–138 (IGLT…LVGA), and 158–178 (HLSL…IFGA). RCK C-terminal domains follow at residues 202–288 (LDND…SFRN) and 290–373 (KEVF…RIGF). The next 5 helical transmembrane spans lie at 383–403 (LLAF…TFQF), 406–426 (FSFG…LGFL), 443–463 (MVKE…AGAG), 477–497 (IAGL…GAFV), and 541–561 (IANV…PGVV).

It belongs to the AAE transporter (TC 2.A.81) family. YbjL subfamily.

It is found in the cell membrane. The protein is Putative transport protein NT01EI_2530 of Edwardsiella ictaluri (strain 93-146).